Consider the following 490-residue polypeptide: Tandem C2 domains nuclear protein (490 aa).

Phosphoserine is present on residues Ser-83, Ser-156, Ser-168, Ser-174, and Ser-211. Residues 189–215 form a disordered region; that stretch reads HDSLSSVPSSSSSRKNSQGSNRSLDTI. Over residues 192–211 the composition is skewed to low complexity; that stretch reads LSSVPSSSSSRKNSQGSNRS. 2 positions are modified to phosphothreonine: Thr-214 and Thr-216. Ser-218 is subject to Phosphoserine. 2 C2 domains span residues 223 to 342 and 344 to 471; these read DFGR…SLDI and PPSK…NQWK. The Nuclear localization signal motif lies at 447 to 449; the sequence is RRK.

It localises to the nucleus. The sequence is that of Tandem C2 domains nuclear protein (TC2N) from Homo sapiens (Human).